Here is a 446-residue protein sequence, read N- to C-terminus: Na(+)-translocating NADH-quinone reductase subunit A (446 aa).

The protein belongs to the NqrA family. Composed of six subunits; NqrA, NqrB, NqrC, NqrD, NqrE and NqrF.

It catalyses the reaction a ubiquinone + n Na(+)(in) + NADH + H(+) = a ubiquinol + n Na(+)(out) + NAD(+). In terms of biological role, NQR complex catalyzes the reduction of ubiquinone-1 to ubiquinol by two successive reactions, coupled with the transport of Na(+) ions from the cytoplasm to the periplasm. NqrA to NqrE are probably involved in the second step, the conversion of ubisemiquinone to ubiquinol. The chain is Na(+)-translocating NADH-quinone reductase subunit A from Histophilus somni (strain 2336) (Haemophilus somnus).